We begin with the raw amino-acid sequence, 151 residues long: 3-hydroxyacyl-thioester dehydratase Z (151 aa).

Residues 11–131 (AAAAGEKVGQ…TVQATVSTTV (121 aa)) form the MaoC-like domain. Residues 60 to 63 (IAHG), 86 to 89 (AINY), 97 to 99 (PAP), Gln-124, and Arg-148 contribute to the substrate site.

The protein belongs to the enoyl-CoA hydratase/isomerase family. In terms of assembly, homodimer.

The enzyme catalyses a (3R)-3-hydroxyacyl-CoA = a (2E)-enoyl-CoA + H2O. Its function is as follows. Shows trans-enoyl-CoA hydratase/3-hydroxyacyl-CoA dehydratase activity. This is 3-hydroxyacyl-thioester dehydratase Z from Mycobacterium bovis (strain ATCC BAA-935 / AF2122/97).